A 226-amino-acid polypeptide reads, in one-letter code: Large ribosomal subunit protein uL1 (226 aa).

Belongs to the universal ribosomal protein uL1 family. Part of the 50S ribosomal subunit.

Functionally, binds directly to 23S rRNA. The L1 stalk is quite mobile in the ribosome, and is involved in E site tRNA release. Its function is as follows. Protein L1 is also a translational repressor protein, it controls the translation of the L11 operon by binding to its mRNA. The chain is Large ribosomal subunit protein uL1 from Mycoplasma genitalium (strain ATCC 33530 / DSM 19775 / NCTC 10195 / G37) (Mycoplasmoides genitalium).